Here is a 252-residue protein sequence, read N- to C-terminus: Ribose-5-phosphate isomerase (252 aa).

It belongs to the ribose 5-phosphate isomerase family.

The protein localises to the cytoplasm. It catalyses the reaction aldehydo-D-ribose 5-phosphate = D-ribulose 5-phosphate. It participates in carbohydrate degradation; pentose phosphate pathway; D-ribose 5-phosphate from D-ribulose 5-phosphate (non-oxidative stage): step 1/1. In Debaryomyces hansenii (strain ATCC 36239 / CBS 767 / BCRC 21394 / JCM 1990 / NBRC 0083 / IGC 2968) (Yeast), this protein is Ribose-5-phosphate isomerase (RKI1).